The primary structure comprises 379 residues: UDP-4-amino-4-deoxy-L-arabinose--oxoglutarate aminotransferase (379 aa).

Lys182 carries the N6-(pyridoxal phosphate)lysine modification.

It belongs to the DegT/DnrJ/EryC1 family. ArnB subfamily. In terms of assembly, homodimer. Pyridoxal 5'-phosphate serves as cofactor.

It carries out the reaction UDP-4-amino-4-deoxy-beta-L-arabinose + 2-oxoglutarate = UDP-beta-L-threo-pentopyranos-4-ulose + L-glutamate. Its pathway is nucleotide-sugar biosynthesis; UDP-4-deoxy-4-formamido-beta-L-arabinose biosynthesis; UDP-4-deoxy-4-formamido-beta-L-arabinose from UDP-alpha-D-glucuronate: step 2/3. It functions in the pathway bacterial outer membrane biogenesis; lipopolysaccharide biosynthesis. Catalyzes the conversion of UDP-4-keto-arabinose (UDP-Ara4O) to UDP-4-amino-4-deoxy-L-arabinose (UDP-L-Ara4N). The modified arabinose is attached to lipid A and is required for resistance to polymyxin and cationic antimicrobial peptides. The chain is UDP-4-amino-4-deoxy-L-arabinose--oxoglutarate aminotransferase from Escherichia coli O127:H6 (strain E2348/69 / EPEC).